The sequence spans 198 residues: Holliday junction branch migration complex subunit RuvA (198 aa).

Positions 1–63 are domain I; the sequence is MYDYIKGQLT…EDAHLLFGFH (63 aa). The segment at 64-142 is domain II; the sequence is TKDEKDVFLK…EAPQETGNTK (79 aa). The interval 143 to 147 is flexible linker; the sequence is ARSNK. Positions 148-198 are domain III; that stretch reads AGNTQLDEAIEALLALGYKATELKKIRAFFEGTSETAEQYIKSALKLLMKG.

It belongs to the RuvA family. In terms of assembly, homotetramer. Forms an RuvA(8)-RuvB(12)-Holliday junction (HJ) complex. HJ DNA is sandwiched between 2 RuvA tetramers; dsDNA enters through RuvA and exits via RuvB. An RuvB hexamer assembles on each DNA strand where it exits the tetramer. Each RuvB hexamer is contacted by two RuvA subunits (via domain III) on 2 adjacent RuvB subunits; this complex drives branch migration. In the full resolvosome a probable DNA-RuvA(4)-RuvB(12)-RuvC(2) complex forms which resolves the HJ.

The protein resides in the cytoplasm. Its function is as follows. The RuvA-RuvB-RuvC complex processes Holliday junction (HJ) DNA during genetic recombination and DNA repair, while the RuvA-RuvB complex plays an important role in the rescue of blocked DNA replication forks via replication fork reversal (RFR). RuvA specifically binds to HJ cruciform DNA, conferring on it an open structure. The RuvB hexamer acts as an ATP-dependent pump, pulling dsDNA into and through the RuvAB complex. HJ branch migration allows RuvC to scan DNA until it finds its consensus sequence, where it cleaves and resolves the cruciform DNA. This is Holliday junction branch migration complex subunit RuvA from Streptococcus pyogenes serotype M18 (strain MGAS8232).